The chain runs to 158 residues: MSKFPMTVQGARALEEEVKHLKGVLRPQISQAIAEARELGDLKENAEYHAAREQQGMVEARIRDIEAKLSNAQVIDVTAIPHSGKVIFGTTVDIANVETDETVTYQIVGDDEADIKGGKISVNSPIARALIGKTEGDAVLVRTPGGDVEYEIVEVRHI.

The stretch at 53 to 73 forms a coiled coil; sequence EQQGMVEARIRDIEAKLSNAQ.

This sequence belongs to the GreA/GreB family.

In terms of biological role, necessary for efficient RNA polymerase transcription elongation past template-encoded arresting sites. The arresting sites in DNA have the property of trapping a certain fraction of elongating RNA polymerases that pass through, resulting in locked ternary complexes. Cleavage of the nascent transcript by cleavage factors such as GreA or GreB allows the resumption of elongation from the new 3'terminus. GreA releases sequences of 2 to 3 nucleotides. The sequence is that of Transcription elongation factor GreA from Pseudomonas aeruginosa (strain ATCC 15692 / DSM 22644 / CIP 104116 / JCM 14847 / LMG 12228 / 1C / PRS 101 / PAO1).